Reading from the N-terminus, the 269-residue chain is Formamidopyrimidine-DNA glycosylase (269 aa).

The active-site Schiff-base intermediate with DNA is Pro2. Glu3 serves as the catalytic Proton donor. Lys58 serves as the catalytic Proton donor; for beta-elimination activity. DNA-binding residues include His91, Arg110, and Lys150. The segment at 235 to 269 (SVYGCENKTCHFCKSKIIKIVQNQRSTFYCRKCQT) adopts an FPG-type zinc-finger fold. Arg259 serves as the catalytic Proton donor; for delta-elimination activity.

Belongs to the FPG family. Monomer. Requires Zn(2+) as cofactor.

The catalysed reaction is Hydrolysis of DNA containing ring-opened 7-methylguanine residues, releasing 2,6-diamino-4-hydroxy-5-(N-methyl)formamidopyrimidine.. It catalyses the reaction 2'-deoxyribonucleotide-(2'-deoxyribose 5'-phosphate)-2'-deoxyribonucleotide-DNA = a 3'-end 2'-deoxyribonucleotide-(2,3-dehydro-2,3-deoxyribose 5'-phosphate)-DNA + a 5'-end 5'-phospho-2'-deoxyribonucleoside-DNA + H(+). Its function is as follows. Involved in base excision repair of DNA damaged by oxidation or by mutagenic agents. Acts as a DNA glycosylase that recognizes and removes damaged bases. Has a preference for oxidized purines, such as 7,8-dihydro-8-oxoguanine (8-oxoG). Has AP (apurinic/apyrimidinic) lyase activity and introduces nicks in the DNA strand. Cleaves the DNA backbone by beta-delta elimination to generate a single-strand break at the site of the removed base with both 3'- and 5'-phosphates. The polypeptide is Formamidopyrimidine-DNA glycosylase (Ruthia magnifica subsp. Calyptogena magnifica).